The sequence spans 286 residues: NAD kinase (286 aa).

D74 serves as the catalytic Proton acceptor. Residues 74–75 (DG), 148–149 (ND), D178, A186, 189–194 (TAYNLS), and Q244 each bind NAD(+).

The protein belongs to the NAD kinase family. Requires a divalent metal cation as cofactor.

Its subcellular location is the cytoplasm. The catalysed reaction is NAD(+) + ATP = ADP + NADP(+) + H(+). Involved in the regulation of the intracellular balance of NAD and NADP, and is a key enzyme in the biosynthesis of NADP. Catalyzes specifically the phosphorylation on 2'-hydroxyl of the adenosine moiety of NAD to yield NADP. The polypeptide is NAD kinase (Campylobacter jejuni (strain RM1221)).